A 708-amino-acid polypeptide reads, in one-letter code: ATP-dependent DNA helicase Hel308 (708 aa).

Residues 1-29 carry the Q motif motif; that stretch reads MSIDDLKLPSNVIDIIKNRGIKKLNPPQT. ATP contacts are provided by residues glutamine 28 and 46–53; that span reads SPTGSGKT. Positions 33–196 constitute a Helicase ATP-binding domain; that stretch reads KKGLLDGNRL…WLGAEPVATN (164 aa). The DEAH box motif lies at 145–148; the sequence is DELH. The 207-residue stretch at 229–435 folds into the Helicase C-terminal domain; sequence HGDDAIIAYT…ERAFYTFLLG (207 aa).

The protein belongs to the helicase family. Hel308 subfamily. Monomer.

The enzyme catalyses Couples ATP hydrolysis with the unwinding of duplex DNA by translocating in the 3'-5' direction.. It carries out the reaction ATP + H2O = ADP + phosphate + H(+). Its function is as follows. DNA-dependent ATPase and 3'-5' DNA helicase that may be involved in repair of stalled replication forks. The polypeptide is ATP-dependent DNA helicase Hel308 (Saccharolobus solfataricus (strain ATCC 35092 / DSM 1617 / JCM 11322 / P2) (Sulfolobus solfataricus)).